The chain runs to 215 residues: Protein GrpE (215 aa).

Polar residues predominate over residues 1 to 28 (MKHTSDTPSNSDMPSDSQATQPNASATG). Residues 1 to 52 (MKHTSDTPSNSDMPSDSQATQPNASATGQAAHAYSSQAQRASADAQAVAGDE) are disordered. The segment covering 29 to 52 (QAAHAYSSQAQRASADAQAVAGDE) has biased composition (low complexity).

The protein belongs to the GrpE family. As to quaternary structure, homodimer.

It localises to the cytoplasm. Its function is as follows. Participates actively in the response to hyperosmotic and heat shock by preventing the aggregation of stress-denatured proteins, in association with DnaK and GrpE. It is the nucleotide exchange factor for DnaK and may function as a thermosensor. Unfolded proteins bind initially to DnaJ; upon interaction with the DnaJ-bound protein, DnaK hydrolyzes its bound ATP, resulting in the formation of a stable complex. GrpE releases ADP from DnaK; ATP binding to DnaK triggers the release of the substrate protein, thus completing the reaction cycle. Several rounds of ATP-dependent interactions between DnaJ, DnaK and GrpE are required for fully efficient folding. The sequence is that of Protein GrpE from Ralstonia pickettii (strain 12J).